A 369-amino-acid chain; its full sequence is Putative FAD-dependent oxidoreductase LodB (369 aa).

Residues 10 to 14 (GGGPA) and R103 contribute to the FAD site.

Requires FAD as cofactor.

It is found in the cytoplasm. Functionally, is required for lysine-epsilon oxidase (LOD) activity in M.mediterranea. May be involved in the generation of the quinonic cofactor of LodA, leading to the active form of LodA containing a tyrosine-derived quinone cofactor. This Marinomonas mediterranea (strain ATCC 700492 / JCM 21426 / NBRC 103028 / MMB-1) protein is Putative FAD-dependent oxidoreductase LodB (lodB).